The following is a 319-amino-acid chain: ATP-dependent 6-phosphofructokinase (319 aa).

Residue glycine 11 coordinates ATP. Residue 21–25 (RAVVR) coordinates ADP. ATP contacts are provided by residues 72–73 (RY) and 102–105 (GDGS). Aspartate 103 contacts Mg(2+). 125-127 (TID) serves as a coordination point for substrate. The Proton acceptor role is filled by aspartate 127. Arginine 154 provides a ligand contact to ADP. Substrate-binding positions include arginine 162 and 169–171 (MGR). Residues 185–187 (GAE), arginine 211, and 213–215 (KKH) each bind ADP. Substrate-binding positions include glutamate 222, arginine 243, and 249–252 (HVQR).

This sequence belongs to the phosphofructokinase type A (PFKA) family. ATP-dependent PFK group I subfamily. Prokaryotic clade 'B1' sub-subfamily. In terms of assembly, homotetramer. Mg(2+) is required as a cofactor.

The protein localises to the cytoplasm. The enzyme catalyses beta-D-fructose 6-phosphate + ATP = beta-D-fructose 1,6-bisphosphate + ADP + H(+). The protein operates within carbohydrate degradation; glycolysis; D-glyceraldehyde 3-phosphate and glycerone phosphate from D-glucose: step 3/4. With respect to regulation, allosterically activated by ADP and other diphosphonucleosides, and allosterically inhibited by phosphoenolpyruvate. Catalyzes the phosphorylation of D-fructose 6-phosphate to fructose 1,6-bisphosphate by ATP, the first committing step of glycolysis. This Listeria innocua serovar 6a (strain ATCC BAA-680 / CLIP 11262) protein is ATP-dependent 6-phosphofructokinase.